The following is a 483-amino-acid chain: Nuc-1 negative regulatory protein preg (483 aa).

Composition is skewed to low complexity over residues 1–32 (MLTRSPASAAATSPTTTVTVTVTAAATSPRPS), 60–80 (SSRRQSATAPATSSTSLPISI), and 176–200 (ASALASTSEATAAPIPHGPTVAVAV). Disordered stretches follow at residues 1 to 112 (MLTR…SRPQ), 164 to 234 (NTVG…SQGD), and 434 to 483 (CPEP…RHAT). Positions 435-473 (PEPEEADDEDEDEELDESDAIGDDDDDIDGEGGEREEET) are enriched in acidic residues.

It belongs to the cyclin family.

In terms of biological role, negative regulator, together with pgov, of the transcriptional activator nuc-1, which controls the expression of phosphorous acquisition enzymes. The polypeptide is Nuc-1 negative regulatory protein preg (preg) (Neurospora crassa (strain ATCC 24698 / 74-OR23-1A / CBS 708.71 / DSM 1257 / FGSC 987)).